The primary structure comprises 257 residues: 4-diphosphocytidyl-2-C-methyl-D-erythritol kinase (257 aa).

Residue Lys-8 is part of the active site. Position 91 to 101 (91 to 101 (PMGGGLGGGSA)) interacts with ATP. Asp-131 is an active-site residue.

This sequence belongs to the GHMP kinase family. IspE subfamily.

It catalyses the reaction 4-CDP-2-C-methyl-D-erythritol + ATP = 4-CDP-2-C-methyl-D-erythritol 2-phosphate + ADP + H(+). It participates in isoprenoid biosynthesis; isopentenyl diphosphate biosynthesis via DXP pathway; isopentenyl diphosphate from 1-deoxy-D-xylulose 5-phosphate: step 3/6. Catalyzes the phosphorylation of the position 2 hydroxy group of 4-diphosphocytidyl-2C-methyl-D-erythritol. The chain is 4-diphosphocytidyl-2-C-methyl-D-erythritol kinase from Petrotoga mobilis (strain DSM 10674 / SJ95).